Here is a 230-residue protein sequence, read N- to C-terminus: Large ribosomal subunit protein uL1 (230 aa).

Belongs to the universal ribosomal protein uL1 family. Part of the 50S ribosomal subunit.

Binds directly to 23S rRNA. The L1 stalk is quite mobile in the ribosome, and is involved in E site tRNA release. In terms of biological role, protein L1 is also a translational repressor protein, it controls the translation of the L11 operon by binding to its mRNA. This is Large ribosomal subunit protein uL1 from Bacillus anthracis (strain A0248).